Consider the following 330-residue polypeptide: Fructose-1,6-bisphosphatase class 1 (330 aa).

Mg(2+) is bound by residues Glu84, Asp103, Leu105, and Asp106. Substrate-binding positions include 106 to 109 (DGSS), Asn196, and Lys262. Residue Glu268 coordinates Mg(2+).

It belongs to the FBPase class 1 family. Homotetramer. Mg(2+) serves as cofactor.

The protein resides in the cytoplasm. It carries out the reaction beta-D-fructose 1,6-bisphosphate + H2O = beta-D-fructose 6-phosphate + phosphate. Its pathway is carbohydrate biosynthesis; gluconeogenesis. The protein is Fructose-1,6-bisphosphatase class 1 of Shewanella sp. (strain ANA-3).